We begin with the raw amino-acid sequence, 491 residues long: Proline--tRNA ligase (491 aa).

This sequence belongs to the class-II aminoacyl-tRNA synthetase family. ProS type 3 subfamily. As to quaternary structure, homodimer.

It localises to the cytoplasm. The catalysed reaction is tRNA(Pro) + L-proline + ATP = L-prolyl-tRNA(Pro) + AMP + diphosphate. Catalyzes the attachment of proline to tRNA(Pro) in a two-step reaction: proline is first activated by ATP to form Pro-AMP and then transferred to the acceptor end of tRNA(Pro). This chain is Proline--tRNA ligase, found in Cytophaga hutchinsonii (strain ATCC 33406 / DSM 1761 / CIP 103989 / NBRC 15051 / NCIMB 9469 / D465).